Reading from the N-terminus, the 235-residue chain is Dephospho-CoA kinase (235 aa).

The DPCK domain occupies 15–219 (NVGLTGSISC…KKERLQRKSA (205 aa)). 23 to 28 (SCGKST) contributes to the ATP binding site.

The protein belongs to the CoaE family.

The protein resides in the cytoplasm. It carries out the reaction 3'-dephospho-CoA + ATP = ADP + CoA + H(+). Its pathway is cofactor biosynthesis; coenzyme A biosynthesis; CoA from (R)-pantothenate: step 5/5. Catalyzes the phosphorylation of the 3'-hydroxyl group of dephosphocoenzyme A to form coenzyme A. The protein is Dephospho-CoA kinase of Syntrophus aciditrophicus (strain SB).